The following is a 720-amino-acid chain: Putative fatty acid oxidation complex trifunctional enzyme (720 aa).

Residues 1-384 (MQNEIKKVCV…SWKYGPFELL (384 aa)) are 3-hydroxyacyl-CoA dehydrogenase. An enoyl-CoA hydratase/isomerase region spans residues 453–720 (FVITTKMNCL…TIEKLKAIVK (268 aa)).

The protein in the N-terminal section; belongs to the 3-hydroxyacyl-CoA dehydrogenase family. This sequence in the C-terminal section; belongs to the enoyl-CoA hydratase/isomerase family.

It catalyses the reaction a (3S)-3-hydroxyacyl-CoA + NAD(+) = a 3-oxoacyl-CoA + NADH + H(+). The enzyme catalyses a (3S)-3-hydroxyacyl-CoA = a (2E)-enoyl-CoA + H2O. The catalysed reaction is a 4-saturated-(3S)-3-hydroxyacyl-CoA = a (3E)-enoyl-CoA + H2O. It carries out the reaction a (3Z)-enoyl-CoA = a 4-saturated (2E)-enoyl-CoA. It catalyses the reaction a (3E)-enoyl-CoA = a 4-saturated (2E)-enoyl-CoA. This chain is Putative fatty acid oxidation complex trifunctional enzyme, found in Rickettsia felis (strain ATCC VR-1525 / URRWXCal2) (Rickettsia azadi).